The primary structure comprises 227 residues: Cytidylate kinase (227 aa).

Residue glycine 12–threonine 20 coordinates ATP.

It belongs to the cytidylate kinase family. Type 1 subfamily.

Its subcellular location is the cytoplasm. The catalysed reaction is CMP + ATP = CDP + ADP. It carries out the reaction dCMP + ATP = dCDP + ADP. This Photorhabdus laumondii subsp. laumondii (strain DSM 15139 / CIP 105565 / TT01) (Photorhabdus luminescens subsp. laumondii) protein is Cytidylate kinase.